The primary structure comprises 122 residues: Allatotropin (122 aa).

A signal peptide spans 1 to 23 (MRVILAITLLFVAGSFIATASKG). The propeptide occupies 24–40 (RNYPRFFKHRMKLREIR). Phe53 bears the Phenylalanine amide mark. A propeptide spanning residues 57–122 (ESPAERIPDL…GDDSKKGTIA (66 aa)) is cleaved from the precursor.

In terms of tissue distribution, expressed in brain and ventral ganglia but not in the retrocerebral complex (at protein level).

It is found in the secreted. Its function is as follows. Neuropeptide stimulator of juvenile hormone synthesis. This chain is Allatotropin, found in Camponotus floridanus (Florida carpenter ant).